The chain runs to 369 residues: Translocating chain-associated membrane protein 1-like 1 (369 aa).

Over 1–29 (MGLRKKSTKNPPVLSQEFILQNHADIVSC) the chain is Cytoplasmic. Residues 30-50 (VGMFFLLGLVFEGTAEASIVF) form a helical membrane-spanning segment. Over 51-81 (LTLQHSVAVPAAEEQATGSKSLYYYGVKDLA) the chain is Lumenal. The chain crosses the membrane as a helical span at residues 82-102 (TVFFYMLVAIIIHATIQEYVL). Residues 103–121 (DKINKRMQFTKAKQNKFNE) are Cytoplasmic-facing. A TLC domain is found at 117-326 (NKFNESGQFS…TLWLQRWVED (210 aa)). Residues 122 to 142 (SGQFSVFYFFSCIWGTFILIS) traverse the membrane as a helical segment. Residues 143–164 (ENCLSDPTLIWKARPHSMMTFQ) lie on the Lumenal side of the membrane. Residues 165 to 185 (MKFFYISQLAYWFHAFPELYF) form a helical membrane-spanning segment. Topologically, residues 186-196 (QKTKKQDIPRQ) are cytoplasmic. A helical membrane pass occupies residues 197 to 215 (LVYIGLHLFHITGAYLLYL). The Lumenal portion of the chain corresponds to 216–219 (NHLG). Residues 220–242 (LLLLVLHYFVELLSHMCGLFYFS) form a helical membrane-spanning segment. The Cytoplasmic segment spans residues 243–249 (DEKYQKG). The chain crosses the membrane as a helical span at residues 250–270 (ISLWAIVFILGRLVTLIVSVL). The Lumenal segment spans residues 271–297 (TVGFHLAGSQNRNPDALTGNVNVLAAK). The chain crosses the membrane as a helical span at residues 298 to 318 (IAVLSSSCTIQAYVTWNLITL). Over 319-369 (WLQRWVEDSNIQASCMKKKRSRSSKKRTENGVGVETSNRVDCPPKRKEKSS) the chain is Cytoplasmic. Positions 335 to 369 (KKKRSRSSKKRTENGVGVETSNRVDCPPKRKEKSS) are disordered. Residues 360 to 369 (CPPKRKEKSS) are compositionally biased toward basic and acidic residues.

This sequence belongs to the TRAM family.

It is found in the endoplasmic reticulum membrane. Stimulatory or required for the translocation of secretory proteins across the ER membrane. The chain is Translocating chain-associated membrane protein 1-like 1 (TRAM1L1) from Homo sapiens (Human).